The following is a 240-amino-acid chain: Putative outer membrane protein RT0057 (240 aa).

A signal peptide spans M1–A20.

The protein belongs to the OmpW/AlkL family.

It is found in the cell outer membrane. This Rickettsia typhi (strain ATCC VR-144 / Wilmington) protein is Putative outer membrane protein RT0057.